A 156-amino-acid chain; its full sequence is Arginine repressor (156 aa).

This sequence belongs to the ArgR family.

It is found in the cytoplasm. It functions in the pathway amino-acid biosynthesis; L-arginine biosynthesis [regulation]. Functionally, regulates arginine biosynthesis genes. This is Arginine repressor from Shewanella frigidimarina (strain NCIMB 400).